A 324-amino-acid polypeptide reads, in one-letter code: Olfactory receptor 52I1 (324 aa).

Topologically, residues 1–29 (MLGPAYNHTMETPASFLLVGIPGLQSSHL) are extracellular. A glycan (N-linked (GlcNAc...) asparagine) is linked at Asn7. Residues 30–50 (WLAISLSAMYITALLGNTLIV) form a helical membrane-spanning segment. Topologically, residues 51–58 (TAIWMDST) are cytoplasmic. Residues 59–79 (RHEPMYCFLCVLAAVDIVMAS) form a helical membrane-spanning segment. At 80–103 (SVVPKMVSIFCSGDSSISFSACFT) the chain is on the extracellular side. A disulfide bridge connects residues Cys101 and Cys193. Residues 104 to 124 (QMFFVHLATAVETGLLLTMAF) form a helical membrane-spanning segment. The Cytoplasmic portion of the chain corresponds to 125 to 143 (DRYVAICKPLHYKRILTPQ). A helical transmembrane segment spans residues 144-164 (VMLGMSMAVTIRAVTFMTPLS). Residues 165-200 (WMMNHLPFCGSNVVVHSYCKHIALARLACADPVPSS) are Extracellular-facing. A helical membrane pass occupies residues 201 to 221 (LYSLIGSSLMVGSDVAFIAAS). Topologically, residues 222–241 (YILILRAVFDLSSKTAQLKA) are cytoplasmic. The helical transmembrane segment at 242–262 (LSTCGSHVGVMALYYLPGMAS) threads the bilayer. Topologically, residues 263–278 (IYAAWLGQDIVPLHTQ) are extracellular. A helical transmembrane segment spans residues 279 to 299 (VLLADLYVIIPATLNPIIYGM). Residues 300-324 (RTKQLLEGIWSYLMHFLFDHSNLGS) lie on the Cytoplasmic side of the membrane.

This sequence belongs to the G-protein coupled receptor 1 family.

The protein localises to the cell membrane. Its function is as follows. Odorant receptor. The sequence is that of Olfactory receptor 52I1 (OR52I1) from Homo sapiens (Human).